Reading from the N-terminus, the 349-residue chain is Protein-glutamate methylesterase/protein-glutamine glutaminase 3 (349 aa).

A Response regulatory domain is found at 2–119 (DVLIVDDSPV…HPDFERDVES (118 aa)). Asp-52 is modified (4-aspartylphosphate). The region spanning 157 to 340 (EGFQPGVIAI…LSPPRIAALL (184 aa)) is the CheB-type methylesterase domain. Catalysis depends on residues Ser-169, His-196, and Asp-289.

Belongs to the CheB family. In terms of processing, phosphorylated by CheA. Phosphorylation of the N-terminal regulatory domain activates the methylesterase activity.

The protein localises to the cytoplasm. It catalyses the reaction [protein]-L-glutamate 5-O-methyl ester + H2O = L-glutamyl-[protein] + methanol + H(+). The catalysed reaction is L-glutaminyl-[protein] + H2O = L-glutamyl-[protein] + NH4(+). In terms of biological role, involved in chemotaxis. Part of a chemotaxis signal transduction system that modulates chemotaxis in response to various stimuli. Catalyzes the demethylation of specific methylglutamate residues introduced into the chemoreceptors (methyl-accepting chemotaxis proteins or MCP) by CheR. Also mediates the irreversible deamidation of specific glutamine residues to glutamic acid. The sequence is that of Protein-glutamate methylesterase/protein-glutamine glutaminase 3 from Hahella chejuensis (strain KCTC 2396).